A 260-amino-acid chain; its full sequence is Acetylglutamate kinase (260 aa).

Residues 46–47 (GG), Arg68, and Asn160 each bind substrate.

The protein belongs to the acetylglutamate kinase family. ArgB subfamily.

The protein resides in the cytoplasm. The enzyme catalyses N-acetyl-L-glutamate + ATP = N-acetyl-L-glutamyl 5-phosphate + ADP. It functions in the pathway amino-acid biosynthesis; L-arginine biosynthesis; N(2)-acetyl-L-ornithine from L-glutamate: step 2/4. In terms of biological role, catalyzes the ATP-dependent phosphorylation of N-acetyl-L-glutamate. The sequence is that of Acetylglutamate kinase from Shewanella sp. (strain ANA-3).